Consider the following 101-residue polypeptide: DNA-binding protein TubR (101 aa).

Homodimer. Dimers bind to DNA, forming a protein-bound filament which may form a helix around the TubZ filament.

Its function is as follows. A DNA-binding protein that is part of the type III plasmid partition system used to ensure correct segregation of the pBM400 plasmid. Binds the plasmid origin of replication, probably cooperatively, forming a ring or short helix with external DNA. Its effect on RNA expression has not been shown. This Priestia megaterium (strain ATCC 12872 / QMB1551) (Bacillus megaterium) protein is DNA-binding protein TubR.